We begin with the raw amino-acid sequence, 447 residues long: Putative vacuolar cation/proton exchanger 4 (447 aa).

The disordered stretch occupies residues 1–29 (MDKSEMDKINGTNPESTDQAPSLASRPDE). Topologically, residues 1-65 (MDKSEMDKIN…VNWGVFGSMK (65 aa)) are cytoplasmic. The span at 10–22 (NGTNPESTDQAPS) shows a compositional bias: polar residues. A helical transmembrane segment spans residues 66-86 (IVFLKSKLNVLIPCGFLAIFL). Topologically, residues 87 to 93 (NYMTQRY) are extracellular. The helical transmembrane segment at 94–114 (GWVFPLSMLGIIPLAERLGFA) threads the bilayer. Residues 115–122 (TDWQISCE) are Cytoplasmic-facing. The chain crosses the membrane as a helical span at residues 123–143 (VGRLLNSAFGNATELIISIHA). Residues 132-167 (GNATELIISIHALSRGKLHVVQQCLLGSILSNLLLV) are cation selection. The Extracellular segment spans residues 144-159 (LSRGKLHVVQQCLLGS). Residues 160–180 (ILSNLLLVLGSAFFSGGLACG) form a helical membrane-spanning segment. The Cytoplasmic segment spans residues 181–190 (KTMQTFSKAD). Residues 191 to 211 (AVVNSGLLLMAVMGLLIPAAL) form a helical membrane-spanning segment. At 212–224 (HYTHSEAQFGKSE) the chain is on the extracellular side. A helical transmembrane segment spans residues 225–245 (LALSRFSSCIMLVAYASYLYF). Topologically, residues 246–286 (QLSNNRRRNEANVYPCMPLIKRRIQDDVDGNDDEVPEISKR) are cytoplasmic. Residues 287–307 (EAISWIAIFIAWISMLSYYLV) form a helical membrane-spanning segment. Residues 308-318 (DAIDGASKAWN) are Extracellular-facing. Residues 319–339 (IPVAFISVVLLPVVGNSAGHA) form a helical membrane-spanning segment. The cation selection stretch occupies residues 333–368 (GNSAGHANAVMFAVKDKLDISLGVAIGSSIQISMFG). Residues 340 to 353 (NAVMFAVKDKLDIS) are Cytoplasmic-facing. A helical membrane pass occupies residues 354–374 (LGVAIGSSIQISMFGIPFCVV). Residues 375-384 (MGWMMGKPMD) lie on the Extracellular side of the membrane. The helical transmembrane segment at 385-405 (LNFHLFETASLLTTVLVVAFL) threads the bilayer. Residues 406–413 (LQDGTSNC) lie on the Cytoplasmic side of the membrane. Residues 414–434 (VKGLMLFLCYLIVAASFYVHA) traverse the membrane as a helical segment. Residues 435–447 (DPNSKASEKPPQN) are Extracellular-facing.

Belongs to the Ca(2+):cation antiporter (CaCA) (TC 2.A.19) family. Cation/proton exchanger (CAX) subfamily.

It is found in the vacuole membrane. In terms of biological role, vacuolar cation/proton exchanger (CAX). Translocates Ca(2+) and other metal ions into vacuoles using the proton gradient formed by H(+)-ATPase and H(+)-pyrophosphatase. The chain is Putative vacuolar cation/proton exchanger 4 from Oryza sativa subsp. japonica (Rice).